Reading from the N-terminus, the 143-residue chain is uncharacterized protein (143 aa).

This is an uncharacterized protein from Homo sapiens (Human).